The following is a 326-amino-acid chain: Peroxidase 39 (326 aa).

The N-terminal stretch at 1 to 23 is a signal peptide; that stretch reads MTRFGLALLMILVIQGLVTFSEA. 4 disulfides stabilise this stretch: Cys34–Cys114, Cys67–Cys72, Cys120–Cys322, and Cys199–Cys232. The Proton acceptor role is filled by His65. Ca(2+) contacts are provided by Asp66, Val69, Gly71, Asp73, and Ser75. N-linked (GlcNAc...) asparagine glycosylation occurs at Asn79. Substrate is bound at residue Pro162. Asn167 carries an N-linked (GlcNAc...) asparagine glycan. His192 contacts heme b. Thr193 provides a ligand contact to Ca(2+). Asn208 and Asn238 each carry an N-linked (GlcNAc...) asparagine glycan. Asp245, Ser248, and Asp253 together coordinate Ca(2+).

Belongs to the peroxidase family. Classical plant (class III) peroxidase subfamily. Heme b is required as a cofactor. Ca(2+) serves as cofactor. As to expression, slightly expressed in roots.

Its subcellular location is the secreted. The enzyme catalyses 2 a phenolic donor + H2O2 = 2 a phenolic radical donor + 2 H2O. In terms of biological role, removal of H(2)O(2), oxidation of toxic reductants, biosynthesis and degradation of lignin, suberization, auxin catabolism, response to environmental stresses such as wounding, pathogen attack and oxidative stress. These functions might be dependent on each isozyme/isoform in each plant tissue. The protein is Peroxidase 39 (PER39) of Arabidopsis thaliana (Mouse-ear cress).